The following is a 326-amino-acid chain: Iron-sulfur cluster assembly SufBD family protein PH0883 (326 aa).

Belongs to the iron-sulfur cluster assembly SufBD family.

This chain is Iron-sulfur cluster assembly SufBD family protein PH0883, found in Pyrococcus horikoshii (strain ATCC 700860 / DSM 12428 / JCM 9974 / NBRC 100139 / OT-3).